Consider the following 687-residue polypeptide: Glycine--tRNA ligase beta subunit (687 aa).

Belongs to the class-II aminoacyl-tRNA synthetase family. In terms of assembly, tetramer of two alpha and two beta subunits.

It is found in the cytoplasm. The catalysed reaction is tRNA(Gly) + glycine + ATP = glycyl-tRNA(Gly) + AMP + diphosphate. In Neisseria meningitidis serogroup A / serotype 4A (strain DSM 15465 / Z2491), this protein is Glycine--tRNA ligase beta subunit.